The sequence spans 117 residues: Large ribosomal subunit protein bL20 (117 aa).

This sequence belongs to the bacterial ribosomal protein bL20 family.

In terms of biological role, binds directly to 23S ribosomal RNA and is necessary for the in vitro assembly process of the 50S ribosomal subunit. It is not involved in the protein synthesizing functions of that subunit. This Leptospira interrogans serogroup Icterohaemorrhagiae serovar copenhageni (strain Fiocruz L1-130) protein is Large ribosomal subunit protein bL20.